The chain runs to 122 residues: Small ribosomal subunit protein uS13 (122 aa).

The interval 95–122 (GLPVRGQKTKTNARTRKGPKRTVANKKK) is disordered.

This sequence belongs to the universal ribosomal protein uS13 family. Part of the 30S ribosomal subunit. Forms a loose heterodimer with protein S19. Forms two bridges to the 50S subunit in the 70S ribosome.

Its function is as follows. Located at the top of the head of the 30S subunit, it contacts several helices of the 16S rRNA. In the 70S ribosome it contacts the 23S rRNA (bridge B1a) and protein L5 of the 50S subunit (bridge B1b), connecting the 2 subunits; these bridges are implicated in subunit movement. Contacts the tRNAs in the A and P-sites. The protein is Small ribosomal subunit protein uS13 of Lachnoclostridium phytofermentans (strain ATCC 700394 / DSM 18823 / ISDg) (Clostridium phytofermentans).